The chain runs to 626 residues: Chaperone protein HtpG (626 aa).

Residues 1 to 341 (MAKREFKAES…SEDLSLNISR (341 aa)) form an a; substrate-binding region. The segment at 342 to 552 (EMLQHDRQLK…DGEVTIEMEK (211 aa)) is b. The interval 553-626 (ILNAMPDNQH…FTNDICKVMA (74 aa)) is c.

Belongs to the heat shock protein 90 family. In terms of assembly, homodimer.

It is found in the cytoplasm. Molecular chaperone. Has ATPase activity. This is Chaperone protein HtpG from Bacillus licheniformis (strain ATCC 14580 / DSM 13 / JCM 2505 / CCUG 7422 / NBRC 12200 / NCIMB 9375 / NCTC 10341 / NRRL NRS-1264 / Gibson 46).